The primary structure comprises 225 residues: MDKRISIAIDGPAAAGKSTVAKVVAKKLSYVYIDTGAMYRTITYAALEQKVDIENEEQLMEVVKNVKIEFQQGENTQLVFLNGQDVSEVIRTPEVTNRVSIVAKHRLVREEMVRRQQELAEKGGVVMDGRDIGTHVLPDAEVKIFMLASVEERAERRHLENMNKGFDSNLEQLKEEIAQRDKLDSEREVSPLKKADDALELDTTSLSIEEVVQKIMGIVLGVFAK.

An ATP-binding site is contributed by 11 to 19 (GPAAAGKST).

The protein belongs to the cytidylate kinase family. Type 1 subfamily.

It is found in the cytoplasm. The enzyme catalyses CMP + ATP = CDP + ADP. It carries out the reaction dCMP + ATP = dCDP + ADP. This Bacillus anthracis (strain A0248) protein is Cytidylate kinase.